We begin with the raw amino-acid sequence, 436 residues long: Trigger factor (436 aa).

In terms of domain architecture, PPIase FKBP-type spans 161–246 (EDQLNIDFVG…VNTVSEPKLP (86 aa)).

Belongs to the FKBP-type PPIase family. Tig subfamily.

The protein localises to the cytoplasm. The enzyme catalyses [protein]-peptidylproline (omega=180) = [protein]-peptidylproline (omega=0). Involved in protein export. Acts as a chaperone by maintaining the newly synthesized protein in an open conformation. Functions as a peptidyl-prolyl cis-trans isomerase. The sequence is that of Trigger factor from Pseudomonas fluorescens (strain Pf0-1).